A 227-amino-acid polypeptide reads, in one-letter code: Triosephosphate isomerase (227 aa).

Residue Asn-6–Lys-8 participates in substrate binding. His-85 serves as the catalytic Electrophile. The active-site Proton acceptor is Glu-152. Positions 158 and 188 each coordinate substrate.

It belongs to the triosephosphate isomerase family. Homodimer.

It is found in the cytoplasm. The enzyme catalyses D-glyceraldehyde 3-phosphate = dihydroxyacetone phosphate. It functions in the pathway carbohydrate biosynthesis; gluconeogenesis. The protein operates within carbohydrate degradation; glycolysis; D-glyceraldehyde 3-phosphate from glycerone phosphate: step 1/1. Involved in the gluconeogenesis. Catalyzes stereospecifically the conversion of dihydroxyacetone phosphate (DHAP) to D-glyceraldehyde-3-phosphate (G3P). The chain is Triosephosphate isomerase from Campylobacter concisus (strain 13826).